We begin with the raw amino-acid sequence, 455 residues long: Glutamate-1-semialdehyde 2,1-aminomutase (455 aa).

K286 carries the post-translational modification N6-(pyridoxal phosphate)lysine.

This sequence belongs to the class-III pyridoxal-phosphate-dependent aminotransferase family. HemL subfamily. In terms of assembly, homodimer. Pyridoxal 5'-phosphate is required as a cofactor.

The protein localises to the cytoplasm. It catalyses the reaction (S)-4-amino-5-oxopentanoate = 5-aminolevulinate. The protein operates within porphyrin-containing compound metabolism; protoporphyrin-IX biosynthesis; 5-aminolevulinate from L-glutamyl-tRNA(Glu): step 2/2. The protein is Glutamate-1-semialdehyde 2,1-aminomutase of Clavibacter michiganensis subsp. michiganensis (strain NCPPB 382).